The sequence spans 351 residues: Photosystem II D2 protein (351 aa).

The chain crosses the membrane as a helical span at residues 39-59 (CSYLALGAWFTGTTFVTSWYT). Histidine 116 is a binding site for chlorophyll a. A helical transmembrane segment spans residues 123–139 (GFCLRQFEIARLVGLRP). Pheophytin a-binding residues include glutamine 128 and asparagine 141. The helical transmembrane segment at 151 to 164 (VFVSVFLLYPLGQA) threads the bilayer. Histidine 196 serves as a coordination point for chlorophyll a. A helical transmembrane segment spans residues 206–226 (GALLCAIHGATVQNTLFEDGE). A plastoquinone contacts are provided by histidine 213 and phenylalanine 260. Histidine 213 serves as a coordination point for Fe cation. Histidine 267 is a Fe cation binding site. A helical membrane pass occupies residues 277–293 (GLWASSIGIVGLALNLR).

This sequence belongs to the reaction center PufL/M/PsbA/D family. As to quaternary structure, PSII is composed of 1 copy each of membrane proteins PsbA, PsbB, PsbC, PsbD, PsbE, PsbF, PsbH, PsbI, PsbJ, PsbK, PsbL, PsbM, PsbT, PsbX, PsbY, PsbZ, Psb30/Ycf12, at least 3 peripheral proteins of the oxygen-evolving complex and a large number of cofactors. It forms dimeric complexes. The D1/D2 heterodimer binds P680, chlorophylls that are the primary electron donor of PSII, and subsequent electron acceptors. It shares a non-heme iron and each subunit binds pheophytin, quinone, additional chlorophylls, carotenoids and lipids. There is also a Cl(-1) ion associated with D1 and D2, which is required for oxygen evolution. The PSII complex binds additional chlorophylls, carotenoids and specific lipids. is required as a cofactor.

The protein resides in the plastid. It localises to the chloroplast thylakoid membrane. It carries out the reaction 2 a plastoquinone + 4 hnu + 2 H2O = 2 a plastoquinol + O2. In terms of biological role, photosystem II (PSII) is a light-driven water:plastoquinone oxidoreductase that uses light energy to abstract electrons from H(2)O, generating O(2) and a proton gradient subsequently used for ATP formation. It consists of a core antenna complex that captures photons, and an electron transfer chain that converts photonic excitation into a charge separation. The D1/D2 (PsbA/PsbD) reaction center heterodimer binds P680, the primary electron donor of PSII as well as several subsequent electron acceptors. D2 is needed for assembly of a stable PSII complex. This Cyanidioschyzon merolae (strain NIES-3377 / 10D) (Unicellular red alga) protein is Photosystem II D2 protein.